Reading from the N-terminus, the 346-residue chain is Uroporphyrinogen decarboxylase (346 aa).

Substrate is bound by residues 21-25, Phe40, Asp71, Tyr146, Ser201, and His316; that span reads RQAGR.

Belongs to the uroporphyrinogen decarboxylase family. Homodimer.

It is found in the cytoplasm. The catalysed reaction is uroporphyrinogen III + 4 H(+) = coproporphyrinogen III + 4 CO2. The protein operates within porphyrin-containing compound metabolism; protoporphyrin-IX biosynthesis; coproporphyrinogen-III from 5-aminolevulinate: step 4/4. In terms of biological role, catalyzes the decarboxylation of four acetate groups of uroporphyrinogen-III to yield coproporphyrinogen-III. This chain is Uroporphyrinogen decarboxylase, found in Rickettsia conorii (strain ATCC VR-613 / Malish 7).